We begin with the raw amino-acid sequence, 476 residues long: Probable cytosolic Fe-S cluster assembly factor GF22738 (476 aa).

[4Fe-4S] cluster is bound by residues C23, C68, C71, C74, C187, C243, C395, and C399.

The protein belongs to the NARF family.

In terms of biological role, component of the cytosolic iron-sulfur (Fe/S) protein assembly machinery. Required for maturation of extramitochondrial Fe/S proteins. The chain is Probable cytosolic Fe-S cluster assembly factor GF22738 from Drosophila ananassae (Fruit fly).